The primary structure comprises 315 residues: L-threo-3-deoxy-hexylosonate aldolase (315 aa).

50-51 (SN) contacts substrate. K174 serves as the catalytic Schiff-base intermediate with substrate.

This sequence belongs to the DapA family.

It carries out the reaction 2-dehydro-3-deoxy-L-galactonate = L-glyceraldehyde + pyruvate. Its pathway is carbohydrate acid metabolism. Its function is as follows. Mediates the conversion of 2-dehydro-3-deoxy-L-galactonate to pyruvate and L-glyceraldehyde in D-galacturonate catabolic process. This chain is L-threo-3-deoxy-hexylosonate aldolase (lga1), found in Hypocrea jecorina (Trichoderma reesei).